The chain runs to 166 residues: Peptide methionine sulfoxide reductase MsrA (166 aa).

Residue C11 is part of the active site.

The protein belongs to the MsrA Met sulfoxide reductase family.

It carries out the reaction L-methionyl-[protein] + [thioredoxin]-disulfide + H2O = L-methionyl-(S)-S-oxide-[protein] + [thioredoxin]-dithiol. The catalysed reaction is [thioredoxin]-disulfide + L-methionine + H2O = L-methionine (S)-S-oxide + [thioredoxin]-dithiol. Its function is as follows. Has an important function as a repair enzyme for proteins that have been inactivated by oxidation. Catalyzes the reversible oxidation-reduction of methionine sulfoxide in proteins to methionine. The sequence is that of Peptide methionine sulfoxide reductase MsrA from Mycoplasmopsis pulmonis (strain UAB CTIP) (Mycoplasma pulmonis).